Here is a 325-residue protein sequence, read N- to C-terminus: Probable ABC transporter permease YtrD (325 aa).

A run of 8 helical transmembrane segments spans residues 16–36, 63–83, 113–133, 146–166, 179–199, 233–253, 272–292, and 298–318; these read VALV…ILNM, SSFI…QLGI, MVIV…IMLL, LGMI…GALT, VAIS…ILFG, YLVI…ISFV, PVQI…GFTA, and GYLI…YFAI.

The protein belongs to the ABC-5 integral membrane protein family. The complex is composed of 2 ATP-binding proteins (YtrB and YtrE), 2 transmembrane proteins (YtrC and YtrD) and a solute-binding protein (YtrF).

The protein resides in the cell membrane. In terms of biological role, part of the ABC transporter complex YtrBCDEF that plays a role in acetoin utilization during stationary phase and sporulation. In Bacillus subtilis (strain 168), this protein is Probable ABC transporter permease YtrD (ytrD).